The following is a 282-amino-acid chain: Bis(5'-nucleosyl)-tetraphosphatase, symmetrical (282 aa).

This sequence belongs to the Ap4A hydrolase family.

The enzyme catalyses P(1),P(4)-bis(5'-adenosyl) tetraphosphate + H2O = 2 ADP + 2 H(+). In terms of biological role, hydrolyzes diadenosine 5',5'''-P1,P4-tetraphosphate to yield ADP. The sequence is that of Bis(5'-nucleosyl)-tetraphosphatase, symmetrical from Salmonella arizonae (strain ATCC BAA-731 / CDC346-86 / RSK2980).